The following is a 520-amino-acid chain: Zinc finger and BTB domain-containing protein 45 (520 aa).

The 64-residue stretch at 33 to 96 (CDVTVRIREA…LYSGSLVVAQ (64 aa)) folds into the BTB domain. Disordered regions lie at residues 182–272 (PAPP…GGAG) and 337–372 (FHLG…PDAA). Residues 206 to 225 (RGEEDDDEETDEETDAEEGE) show a composition bias toward acidic residues. Residues 342-363 (PGPPAPTPPTPSGPAPAPPPTF) are compositionally biased toward pro residues. 4 consecutive C2H2-type zinc fingers follow at residues 412 to 434 (YECS…MFIH), 440 to 462 (HQCA…MVTH), 468 to 490 (FQCA…MRTH), and 495 to 517 (APCP…LAAH).

It belongs to the krueppel C2H2-type zinc-finger protein family.

Its subcellular location is the nucleus. Its function is as follows. May be involved in transcriptional regulation. In the central nervous system, may play a role in glial cell differentiation. This Mus musculus (Mouse) protein is Zinc finger and BTB domain-containing protein 45.